The primary structure comprises 271 residues: Autophagy-related protein 27 (271 aa).

The N-terminal stretch at 1-19 (MVSKTWICGFISIITVVQA) is a signal peptide. One can recognise an MRH domain in the interval 20-166 (LSCEKHDVLK…TLKGPSGCLK (147 aa)). Residues 20–199 (LSCEKHDVLK…PAKKAGGTSW (180 aa)) lie on the Lumenal side of the membrane. 3 cysteine pairs are disulfide-bonded: C22-C60, C71-C78, and C135-C164. The interval 161–194 (PSGCLKSKDDDKKNGDGDNGKDGDSEGKKPAKKA) is disordered. Over residues 166–189 (KSKDDDKKNGDGDNGKDGDSEGKK) the composition is skewed to basic and acidic residues. A helical transmembrane segment spans residues 200-220 (FTWLFLYALLFTLIYLMVVSF). At 221-271 (LNTRGGSFQDFRAEFIQRSTQFLTSLPEFCKEVVSRILGRSTAQRGGYSAV) the chain is on the cytoplasmic side.

The protein belongs to the ATG27 family. In terms of assembly, forms a complex with ATG9 and ATG23.

It is found in the cytoplasmic vesicle membrane. It localises to the golgi apparatus membrane. The protein localises to the mitochondrion membrane. The protein resides in the preautophagosomal structure membrane. In terms of biological role, effector of VPS34 phosphatidylinositol 3-phosphate kinase signaling. Regulates the cytoplasm to vacuole transport (Cvt) vesicle formation. Plays a role in ATG protein retrieval from the pre-autophagosomal structure (PAS) and is especially required for autophagy-dependent cycling of ATG9. The protein is Autophagy-related protein 27 (ATG27) of Saccharomyces cerevisiae (strain ATCC 204508 / S288c) (Baker's yeast).